The following is a 429-amino-acid chain: UDP-N-acetylglucosamine 1-carboxyvinyltransferase (429 aa).

22–23 serves as a coordination point for phosphoenolpyruvate; that stretch reads KN. A UDP-N-acetyl-alpha-D-glucosamine-binding site is contributed by Arg102. Cys126 (proton donor) is an active-site residue. 2-(S-cysteinyl)pyruvic acid O-phosphothioketal is present on Cys126. Residues 171–174, Asp316, and Ile338 each bind UDP-N-acetyl-alpha-D-glucosamine; that span reads KVSV.

This sequence belongs to the EPSP synthase family. MurA subfamily.

The protein localises to the cytoplasm. The catalysed reaction is phosphoenolpyruvate + UDP-N-acetyl-alpha-D-glucosamine = UDP-N-acetyl-3-O-(1-carboxyvinyl)-alpha-D-glucosamine + phosphate. The protein operates within cell wall biogenesis; peptidoglycan biosynthesis. In terms of biological role, cell wall formation. Adds enolpyruvyl to UDP-N-acetylglucosamine. The sequence is that of UDP-N-acetylglucosamine 1-carboxyvinyltransferase from Azorhizobium caulinodans (strain ATCC 43989 / DSM 5975 / JCM 20966 / LMG 6465 / NBRC 14845 / NCIMB 13405 / ORS 571).